A 341-amino-acid chain; its full sequence is Putative ankyrin repeat protein FPV031 (341 aa).

ANK repeat units follow at residues 23–55 (DRNSLLLVATKRNYIDVVRYLVKKGVDINFQET), 58–87 (DNLTPLMIASRFNSHQLVELLLNNGAIINQ), 92–124 (CGNTALHLAVKNDNRITVDILLFHGANTNITNN), 125–158 (DGFTPLHKAVIYNASIDIIKKLLRYKADVNIRDN), and 163–195 (TGLTPLDIAMSCNNYEIISLLVSHVIRLDYSTC).

In Fowlpox virus (strain NVSL) (FPV), this protein is Putative ankyrin repeat protein FPV031 (ANK3).